The primary structure comprises 131 residues: Fumarate reductase subunit C (131 aa).

The next 3 membrane-spanning stretches (helical) occupy residues 30 to 50 (EGTA…LFAL), 61 to 81 (IGFL…AAAL), and 110 to 130 (IKGL…VALF).

This sequence belongs to the FrdC family. In terms of assembly, part of an enzyme complex containing four subunits: a flavoprotein (FrdA), an iron-sulfur protein (FrdB), and two hydrophobic anchor proteins (FrdC and FrdD).

The protein resides in the cell inner membrane. In terms of biological role, two distinct, membrane-bound, FAD-containing enzymes are responsible for the catalysis of fumarate and succinate interconversion; fumarate reductase is used in anaerobic growth, and succinate dehydrogenase is used in aerobic growth. Anchors the catalytic components of the fumarate reductase complex to the cell inner membrane, binds quinones. The polypeptide is Fumarate reductase subunit C (Klebsiella pneumoniae (strain 342)).